A 502-amino-acid polypeptide reads, in one-letter code: ATP synthase subunit alpha (502 aa).

169–176 (GDRQTGKT) lines the ATP pocket.

It belongs to the ATPase alpha/beta chains family. F-type ATPases have 2 components, CF(1) - the catalytic core - and CF(0) - the membrane proton channel. CF(1) has five subunits: alpha(3), beta(3), gamma(1), delta(1), epsilon(1). CF(0) has three main subunits: a(1), b(2) and c(9-12). The alpha and beta chains form an alternating ring which encloses part of the gamma chain. CF(1) is attached to CF(0) by a central stalk formed by the gamma and epsilon chains, while a peripheral stalk is formed by the delta and b chains.

Its subcellular location is the cell membrane. It catalyses the reaction ATP + H2O + 4 H(+)(in) = ADP + phosphate + 5 H(+)(out). Functionally, produces ATP from ADP in the presence of a proton gradient across the membrane. The alpha chain is a regulatory subunit. The sequence is that of ATP synthase subunit alpha from Bacillus sp. (strain PS3).